A 252-amino-acid polypeptide reads, in one-letter code: Hydroxyacylglutathione hydrolase (252 aa).

Zn(2+) is bound by residues H54, H56, D58, H59, H111, D128, and H166.

It belongs to the metallo-beta-lactamase superfamily. Glyoxalase II family. Monomer. The cofactor is Zn(2+).

The catalysed reaction is an S-(2-hydroxyacyl)glutathione + H2O = a 2-hydroxy carboxylate + glutathione + H(+). Its pathway is secondary metabolite metabolism; methylglyoxal degradation; (R)-lactate from methylglyoxal: step 2/2. Thiolesterase that catalyzes the hydrolysis of S-D-lactoyl-glutathione to form glutathione and D-lactic acid. The sequence is that of Hydroxyacylglutathione hydrolase from Aliivibrio fischeri (strain ATCC 700601 / ES114) (Vibrio fischeri).